The primary structure comprises 649 residues: Acetylcholinesterase (649 aa).

The signal sequence occupies residues Met1 to Gly38. Cysteines 104 and 131 form a disulfide. 2 N-linked (GlcNAc...) asparagine glycosylation sites follow: Asn126 and Asn174. Ser276 (acyl-ester intermediate) is an active-site residue. A disulfide bridge links Cys330 with Cys345. The N-linked (GlcNAc...) asparagine glycan is linked to Asn331. Residues Glu405 and His518 each act as charge relay system in the active site. Cys480 and Cys598 are disulfide-bonded. The N-linked (GlcNAc...) asparagine glycan is linked to Asn531. The GPI-anchor amidated serine moiety is linked to residue Ser619. Positions Gly620–Phe649 are cleaved as a propeptide — removed in mature form.

It belongs to the type-B carboxylesterase/lipase family. In terms of assembly, homodimer; disulfide-linked. The active unit is formed by non-covalent association of the 55 kDa and 16 kDa subunits. In terms of processing, proteolytic cleavage into the 16 kDa subunit and the 55 kDa subunits originates from the hydrophilic peptide, aa 148-180, and is associated with excretion out of the cell. Post-translationally, neither N-glycosylation nor dimerization is required for enzyme activity or substrate specificity, but protects the protein against proteolytic digestion.

It is found in the synapse. It localises to the cell membrane. The enzyme catalyses acetylcholine + H2O = choline + acetate + H(+). Functionally, rapidly hydrolyzes choline released into the synapse. It can hydrolyze butyrylthiocholine. This chain is Acetylcholinesterase (Ace), found in Drosophila melanogaster (Fruit fly).